The following is a 657-amino-acid chain: 1-deoxy-D-xylulose-5-phosphate synthase (657 aa).

Thiamine diphosphate-binding positions include histidine 73 and 113–115 (SHA). Aspartate 145 contributes to the Mg(2+) binding site. Thiamine diphosphate contacts are provided by residues 146-147 (GA), asparagine 175, tyrosine 293, and glutamate 375. Residue asparagine 175 coordinates Mg(2+).

It belongs to the transketolase family. DXPS subfamily. In terms of assembly, homodimer. Requires Mg(2+) as cofactor. Thiamine diphosphate serves as cofactor.

The enzyme catalyses D-glyceraldehyde 3-phosphate + pyruvate + H(+) = 1-deoxy-D-xylulose 5-phosphate + CO2. It participates in metabolic intermediate biosynthesis; 1-deoxy-D-xylulose 5-phosphate biosynthesis; 1-deoxy-D-xylulose 5-phosphate from D-glyceraldehyde 3-phosphate and pyruvate: step 1/1. In terms of biological role, catalyzes the acyloin condensation reaction between C atoms 2 and 3 of pyruvate and glyceraldehyde 3-phosphate to yield 1-deoxy-D-xylulose-5-phosphate (DXP). The protein is 1-deoxy-D-xylulose-5-phosphate synthase of Renibacterium salmoninarum (strain ATCC 33209 / DSM 20767 / JCM 11484 / NBRC 15589 / NCIMB 2235).